The primary structure comprises 971 residues: Polyamine-modulated factor 1-binding protein 1 (971 aa).

6 coiled-coil regions span residues 37–69 (NKQY…LQAS), 117–229 (EKLH…ACSN), 282–325 (LHVE…LREE), 355–680 (QKLS…SAIQ), 706–827 (QDDL…DEKE), and 879–916 (IAKL…KAGT).

As to expression, expressed in testis and more specifically in ODF, the sperm tail specific cytoskeletal structure. Also expressed in epididymides and brain.

Its subcellular location is the cell projection. It localises to the cilium. The protein resides in the flagellum. In terms of biological role, required for normal spermatogenesis. It functions as a scaffold protein that attaches the sperm head-tail connecting piece to the nuclear envelope, thus maintaining sperm head and tail integrity. May also be involved in the general organization of cellular cytoskeleton. The sequence is that of Polyamine-modulated factor 1-binding protein 1 (Pmfbp1) from Rattus norvegicus (Rat).